Reading from the N-terminus, the 191-residue chain is Glycerol-3-phosphate acyltransferase (191 aa).

Helical transmembrane passes span 5 to 25 (IVFV…ITKI), 50 to 70 (CIAA…VYIA), 78 to 98 (SFHM…PVWL), 112 to 132 (ILIA…LAVF), and 153 to 173 (SFFF…LIFF).

Belongs to the PlsY family. In terms of assembly, probably interacts with PlsX.

Its subcellular location is the cell membrane. It carries out the reaction an acyl phosphate + sn-glycerol 3-phosphate = a 1-acyl-sn-glycero-3-phosphate + phosphate. Its pathway is lipid metabolism; phospholipid metabolism. In terms of biological role, catalyzes the transfer of an acyl group from acyl-phosphate (acyl-PO(4)) to glycerol-3-phosphate (G3P) to form lysophosphatidic acid (LPA). This enzyme utilizes acyl-phosphate as fatty acyl donor, but not acyl-CoA or acyl-ACP. This Wolbachia sp. subsp. Brugia malayi (strain TRS) protein is Glycerol-3-phosphate acyltransferase.